A 209-amino-acid polypeptide reads, in one-letter code: UPF0319 protein VF_1616 (209 aa).

The N-terminal stretch at 1 to 21 (MKIQSIFAASFCLLSSISAHA) is a signal peptide.

The protein belongs to the UPF0319 family.

This is UPF0319 protein VF_1616 from Aliivibrio fischeri (strain ATCC 700601 / ES114) (Vibrio fischeri).